A 335-amino-acid polypeptide reads, in one-letter code: tRNA N6-adenosine threonylcarbamoyltransferase (335 aa).

Positions 112 and 116 each coordinate Fe cation. Residues 134–138 (VVSGG), D167, G180, and N273 contribute to the substrate site. D301 contacts Fe cation.

The protein belongs to the KAE1 / TsaD family. Fe(2+) serves as cofactor.

It localises to the cytoplasm. The catalysed reaction is L-threonylcarbamoyladenylate + adenosine(37) in tRNA = N(6)-L-threonylcarbamoyladenosine(37) in tRNA + AMP + H(+). In terms of biological role, required for the formation of a threonylcarbamoyl group on adenosine at position 37 (t(6)A37) in tRNAs that read codons beginning with adenine. Is involved in the transfer of the threonylcarbamoyl moiety of threonylcarbamoyl-AMP (TC-AMP) to the N6 group of A37, together with TsaE and TsaB. TsaD likely plays a direct catalytic role in this reaction. The polypeptide is tRNA N6-adenosine threonylcarbamoyltransferase (Shouchella clausii (strain KSM-K16) (Alkalihalobacillus clausii)).